Here is a 383-residue protein sequence, read N- to C-terminus: Chorismate synthase (383 aa).

NADP(+)-binding residues include Arg39 and Arg45. Residues Arg128–Ser130, Gly291, Lys306–Thr310, and Arg332 contribute to the FMN site.

It belongs to the chorismate synthase family. In terms of assembly, homotetramer. FMNH2 is required as a cofactor.

The catalysed reaction is 5-O-(1-carboxyvinyl)-3-phosphoshikimate = chorismate + phosphate. Its pathway is metabolic intermediate biosynthesis; chorismate biosynthesis; chorismate from D-erythrose 4-phosphate and phosphoenolpyruvate: step 7/7. In terms of biological role, catalyzes the anti-1,4-elimination of the C-3 phosphate and the C-6 proR hydrogen from 5-enolpyruvylshikimate-3-phosphate (EPSP) to yield chorismate, which is the branch point compound that serves as the starting substrate for the three terminal pathways of aromatic amino acid biosynthesis. This reaction introduces a second double bond into the aromatic ring system. This is Chorismate synthase from Thermus thermophilus (strain ATCC 27634 / DSM 579 / HB8).